The primary structure comprises 339 residues: GTPase Obg (339 aa).

In terms of domain architecture, Obg spans 1 to 159 (MKFLDQAKVY…RALWLRLKLI (159 aa)). In terms of domain architecture, OBG-type G spans 160–327 (ADGGIIGLPN…VLRSVAHVIE (168 aa)). Residues 166-173 (GLPNAGKS), 191-195 (FTTLY), 212-215 (DIPG), 279-282 (SQVD), and 308-310 (SAV) contribute to the GTP site. Mg(2+)-binding residues include S173 and T193.

Belongs to the TRAFAC class OBG-HflX-like GTPase superfamily. OBG GTPase family. As to quaternary structure, monomer. Mg(2+) is required as a cofactor.

The protein resides in the cytoplasm. In terms of biological role, an essential GTPase which binds GTP, GDP and possibly (p)ppGpp with moderate affinity, with high nucleotide exchange rates and a fairly low GTP hydrolysis rate. Plays a role in control of the cell cycle, stress response, ribosome biogenesis and in those bacteria that undergo differentiation, in morphogenesis control. This Bartonella bacilliformis (strain ATCC 35685 / KC583 / Herrer 020/F12,63) protein is GTPase Obg.